We begin with the raw amino-acid sequence, 269 residues long: MKKIFAVLGDPIEHSLSPIMHNSAFEALDMDCTYHAFRVEKNDLENALQGAKAMGFGGLNLTVPLKETALKFVDADSLAAKIGAINTIDFKDGIKGYNTDGIGAKRTIEDEGVDIKDKNVLILGAGGAARAIAFTFAEAGANVNIANRTPERAMQLAAEIGDAKGYGLDIVDNGLEDIDILINTTTVGLGNSNGTLVTAEQMHSDLAVFDIVYNPLMTKLLQEAETAGARPITGIMMLVYQGAEAFRIWTGKEPPINVMKKTVMETLDI.

Residues 15–17 (SLS) and threonine 62 each bind shikimate. Lysine 66 serves as the catalytic Proton acceptor. Positions 86 and 100 each coordinate shikimate. Residues 124–128 (GAGGA), 147–152 (NRTPER), and isoleucine 211 contribute to the NADP(+) site. Tyrosine 213 contacts shikimate. Glycine 234 lines the NADP(+) pocket.

Belongs to the shikimate dehydrogenase family. As to quaternary structure, homodimer.

The enzyme catalyses shikimate + NADP(+) = 3-dehydroshikimate + NADPH + H(+). The protein operates within metabolic intermediate biosynthesis; chorismate biosynthesis; chorismate from D-erythrose 4-phosphate and phosphoenolpyruvate: step 4/7. Its function is as follows. Involved in the biosynthesis of the chorismate, which leads to the biosynthesis of aromatic amino acids. Catalyzes the reversible NADPH linked reduction of 3-dehydroshikimate (DHSA) to yield shikimate (SA). This chain is Shikimate dehydrogenase (NADP(+)), found in Methanococcoides burtonii (strain DSM 6242 / NBRC 107633 / OCM 468 / ACE-M).